Here is a 763-residue protein sequence, read N- to C-terminus: Phosphoglycerol transferase I (763 aa).

A run of 4 helical transmembrane segments spans residues 1–21 (MSEL…AWKA), 26–46 (WWFA…ITLF), 77–97 (ILPG…LGWI), and 108–128 (FGYS…SPAF).

Belongs to the OpgB family.

It localises to the cell inner membrane. It carries out the reaction a phosphatidylglycerol + a membrane-derived-oligosaccharide D-glucose = a 1,2-diacyl-sn-glycerol + a membrane-derived-oligosaccharide 6-(glycerophospho)-D-glucose.. The protein operates within glycan metabolism; osmoregulated periplasmic glucan (OPG) biosynthesis. Transfers a phosphoglycerol residue from phosphatidylglycerol to the membrane-bound nascent glucan backbones. The polypeptide is Phosphoglycerol transferase I (Escherichia coli (strain ATCC 8739 / DSM 1576 / NBRC 3972 / NCIMB 8545 / WDCM 00012 / Crooks)).